A 269-amino-acid chain; its full sequence is tRNA (guanine-N(7)-)-methyltransferase (269 aa).

The interval 1 to 38 (MDGVNDAANHTVESVPGRPSTASAPLEAGRRSPTGSRL) is disordered. S-adenosyl-L-methionine-binding residues include Glu-91, Glu-116, Asp-143, and Asp-166. The active site involves Asp-166. Substrate-binding positions include Lys-170, Asp-202, and 247-250 (TKFE).

This sequence belongs to the class I-like SAM-binding methyltransferase superfamily. TrmB family.

The enzyme catalyses guanosine(46) in tRNA + S-adenosyl-L-methionine = N(7)-methylguanosine(46) in tRNA + S-adenosyl-L-homocysteine. The protein operates within tRNA modification; N(7)-methylguanine-tRNA biosynthesis. In terms of biological role, catalyzes the formation of N(7)-methylguanine at position 46 (m7G46) in tRNA. This chain is tRNA (guanine-N(7)-)-methyltransferase, found in Nocardia farcinica (strain IFM 10152).